The sequence spans 105 residues: MPGAVELDENTINPVSDIAYKDDNGNWRAGPDAKKGYEQGQFIDSDYAEKATSIRRTTNLIKSIQRARDVSEGEARELKDDMVTELEKAETKEERRDIWQKYGSP.

Residues Asn-59–Asp-97 adopt a coiled-coil conformation.

The protein localises to the virion. In His1 virus (isolate Australia/Victoria) (His1V), this protein is Structural protein 11.